Here is a 126-residue protein sequence, read N- to C-terminus: Large ribosomal subunit protein bL17 (126 aa).

The protein belongs to the bacterial ribosomal protein bL17 family. As to quaternary structure, part of the 50S ribosomal subunit. Contacts protein L32.

The sequence is that of Large ribosomal subunit protein bL17 from Laribacter hongkongensis (strain HLHK9).